Reading from the N-terminus, the 314-residue chain is Aspartate carbamoyltransferase catalytic subunit (314 aa).

Residues arginine 55 and threonine 56 each coordinate carbamoyl phosphate. Lysine 83 contributes to the L-aspartate binding site. Arginine 105, histidine 139, and glutamine 142 together coordinate carbamoyl phosphate. The L-aspartate site is built by arginine 172 and arginine 226. 2 residues coordinate carbamoyl phosphate: glycine 267 and proline 268.

Belongs to the aspartate/ornithine carbamoyltransferase superfamily. ATCase family. Heterododecamer (2C3:3R2) of six catalytic PyrB chains organized as two trimers (C3), and six regulatory PyrI chains organized as three dimers (R2).

The enzyme catalyses carbamoyl phosphate + L-aspartate = N-carbamoyl-L-aspartate + phosphate + H(+). Its pathway is pyrimidine metabolism; UMP biosynthesis via de novo pathway; (S)-dihydroorotate from bicarbonate: step 2/3. Its function is as follows. Catalyzes the condensation of carbamoyl phosphate and aspartate to form carbamoyl aspartate and inorganic phosphate, the committed step in the de novo pyrimidine nucleotide biosynthesis pathway. The polypeptide is Aspartate carbamoyltransferase catalytic subunit (Rhodococcus erythropolis (strain PR4 / NBRC 100887)).